The sequence spans 290 residues: Sodium/potassium-transporting ATPase subunit beta-2 (290 aa).

At 1–39 the chain is on the cytoplasmic side; that stretch reads MVIQKEKKSCGQVVEEWKEFVWNPRTHQFMGRTGTSWAF. A helical; Signal-anchor for type II membrane protein membrane pass occupies residues 40-67; that stretch reads ILLFYLVFYGFLTAMFTLTMWVMLQTVS. Over 68-290 the chain is Extracellular; it reads DHTPKYQDRL…VAFKLRINKT (223 aa). Residues Asn96 and Asn118 are each glycosylated (N-linked (GlcNAc...) asparagine). A disulfide bridge connects residues Cys129 and Cys150. N-linked (GlcNAc...) asparagine glycans are attached at residues Asn153 and Asn159. The cysteines at positions 160 and 177 are disulfide-linked. Asn193, Asn197, and Asn238 each carry an N-linked (GlcNAc...) asparagine glycan. Positions 193-290 are immunoglobulin-like; that stretch reads NQSMNVTCAG…VAFKLRINKT (98 aa). Residues Cys200 and Cys261 are joined by a disulfide bond.

The protein belongs to the X(+)/potassium ATPases subunit beta family. The sodium/potassium-transporting ATPase is composed of a catalytic alpha subunit, an auxiliary non-catalytic beta subunit and an additional regulatory subunit. Interacts with isoform 2 of BSG.

Its subcellular location is the cell membrane. In terms of biological role, this is the non-catalytic component of the active enzyme, which catalyzes the hydrolysis of ATP coupled with the exchange of Na(+) and K(+) ions across the plasma membrane. The exact function of the beta-2 subunit is not known. Its function is as follows. Mediates cell adhesion of neurons and astrocytes, and promotes neurite outgrowth. This chain is Sodium/potassium-transporting ATPase subunit beta-2 (ATP1B2), found in Homo sapiens (Human).